Here is a 482-residue protein sequence, read N- to C-terminus: Cardiolipin synthase (482 aa).

Transmembrane regions (helical) follow at residues 4 to 24 (LAYL…VTVF) and 34 to 54 (WAWL…YLIF). 2 PLD phosphodiesterase domains span residues 217-244 (LNYR…GDEY) and 395-422 (DNGF…DFRS). Active-site residues include histidine 222, lysine 224, aspartate 229, histidine 400, lysine 402, and aspartate 407.

This sequence belongs to the phospholipase D family. Cardiolipin synthase subfamily.

Its subcellular location is the cell membrane. It catalyses the reaction 2 a 1,2-diacyl-sn-glycero-3-phospho-(1'-sn-glycerol) = a cardiolipin + glycerol. In terms of biological role, catalyzes the reversible phosphatidyl group transfer from one phosphatidylglycerol molecule to another to form cardiolipin (CL) (diphosphatidylglycerol) and glycerol. The sequence is that of Cardiolipin synthase (cls) from Listeria monocytogenes serotype 4b (strain CLIP80459).